The following is a 211-amino-acid chain: Imidazole glycerol phosphate synthase subunit HisH (211 aa).

The Glutamine amidotransferase type-1 domain maps to V3 to A211. C81 (nucleophile) is an active-site residue. Active-site residues include H186 and E188.

Heterodimer of HisH and HisF.

The protein resides in the cytoplasm. The enzyme catalyses 5-[(5-phospho-1-deoxy-D-ribulos-1-ylimino)methylamino]-1-(5-phospho-beta-D-ribosyl)imidazole-4-carboxamide + L-glutamine = D-erythro-1-(imidazol-4-yl)glycerol 3-phosphate + 5-amino-1-(5-phospho-beta-D-ribosyl)imidazole-4-carboxamide + L-glutamate + H(+). It carries out the reaction L-glutamine + H2O = L-glutamate + NH4(+). It participates in amino-acid biosynthesis; L-histidine biosynthesis; L-histidine from 5-phospho-alpha-D-ribose 1-diphosphate: step 5/9. Its function is as follows. IGPS catalyzes the conversion of PRFAR and glutamine to IGP, AICAR and glutamate. The HisH subunit catalyzes the hydrolysis of glutamine to glutamate and ammonia as part of the synthesis of IGP and AICAR. The resulting ammonia molecule is channeled to the active site of HisF. The polypeptide is Imidazole glycerol phosphate synthase subunit HisH (Nostoc sp. (strain PCC 7120 / SAG 25.82 / UTEX 2576)).